Here is a 154-residue protein sequence, read N- to C-terminus: Urease subunit alpha (154 aa).

One can recognise a Urease domain in the interval 38 to 154 (GGIDTHIHFI…ADEMDIQVAI (117 aa)). Residues H43, H45, and K126 each coordinate Ni(2+). K126 carries the N6-carboxylysine modification. Residue H128 coordinates substrate.

Belongs to the metallo-dependent hydrolases superfamily. Urease alpha subunit family. As to quaternary structure, heterotrimer of UreA (gamma), UreB (beta) and UreC (alpha) subunits. Three heterotrimers associate to form the active enzyme. Ni cation is required as a cofactor. In terms of processing, carboxylation allows a single lysine to coordinate two nickel ions.

The protein resides in the cytoplasm. The enzyme catalyses urea + 2 H2O + H(+) = hydrogencarbonate + 2 NH4(+). It participates in nitrogen metabolism; urea degradation; CO(2) and NH(3) from urea (urease route): step 1/1. The protein is Urease subunit alpha (ureC) of Photobacterium damselae subsp. damselae (Listonella damsela).